The primary structure comprises 351 residues: Tropomodulin-2 (351 aa).

S25 is subject to Phosphoserine.

Belongs to the tropomodulin family. Binds to the N-terminus of tropomyosin and to actin. As to expression, neuronal-tissue specific.

It localises to the cytoplasm. It is found in the cytoskeleton. In terms of biological role, blocks the elongation and depolymerization of the actin filaments at the pointed end. The Tmod/TM complex contributes to the formation of the short actin protofilament, which in turn defines the geometry of the membrane skeleton. The polypeptide is Tropomodulin-2 (TMOD2) (Homo sapiens (Human)).